A 61-amino-acid polypeptide reads, in one-letter code: Large ribosomal subunit protein bL32 (61 aa).

Residues 1 to 22 (MAVPKQKSSKSRGRKRRTHQKV) form a disordered region. A compositionally biased stretch (basic residues) spans 7–20 (KSSKSRGRKRRTHQ).

This sequence belongs to the bacterial ribosomal protein bL32 family.

The chain is Large ribosomal subunit protein bL32 from Desulforapulum autotrophicum (strain ATCC 43914 / DSM 3382 / VKM B-1955 / HRM2) (Desulfobacterium autotrophicum).